The primary structure comprises 350 residues: tRNA uridine(34) hydroxylase (350 aa).

Residues 146–240 form the Rhodanese domain; that stretch reads DDPDAVFIDM…YARRARAQGL (95 aa). Cys-200 serves as the catalytic Cysteine persulfide intermediate. A compositionally biased stretch (basic and acidic residues) spans 319 to 328; that stretch reads RRRRAGRENG. The interval 319–350 is disordered; sequence RRRRAGRENGNKIFNKSRGRLNSKLSIPDPAE.

The protein belongs to the TrhO family.

It catalyses the reaction uridine(34) in tRNA + AH2 + O2 = 5-hydroxyuridine(34) in tRNA + A + H2O. Its function is as follows. Catalyzes oxygen-dependent 5-hydroxyuridine (ho5U) modification at position 34 in tRNAs. This Salmonella paratyphi B (strain ATCC BAA-1250 / SPB7) protein is tRNA uridine(34) hydroxylase.